Here is a 474-residue protein sequence, read N- to C-terminus: tRNA-2-methylthio-N(6)-dimethylallyladenosine synthase (474 aa).

One can recognise an MTTase N-terminal domain in the interval 3–120; the sequence is KKLHIKTWGC…LPEMINSVRG (118 aa). [4Fe-4S] cluster is bound by residues Cys12, Cys49, Cys83, Cys157, Cys161, and Cys164. The 233-residue stretch at 143 to 375 folds into the Radical SAM core domain; sequence RAEGPTAFVS…QERINQQAMA (233 aa). Residues 378–441 form the TRAM domain; it reads RRMLGTTQRI…PNSLRGKVVR (64 aa).

The protein belongs to the methylthiotransferase family. MiaB subfamily. As to quaternary structure, monomer. Requires [4Fe-4S] cluster as cofactor.

Its subcellular location is the cytoplasm. The enzyme catalyses N(6)-dimethylallyladenosine(37) in tRNA + (sulfur carrier)-SH + AH2 + 2 S-adenosyl-L-methionine = 2-methylsulfanyl-N(6)-dimethylallyladenosine(37) in tRNA + (sulfur carrier)-H + 5'-deoxyadenosine + L-methionine + A + S-adenosyl-L-homocysteine + 2 H(+). Functionally, catalyzes the methylthiolation of N6-(dimethylallyl)adenosine (i(6)A), leading to the formation of 2-methylthio-N6-(dimethylallyl)adenosine (ms(2)i(6)A) at position 37 in tRNAs that read codons beginning with uridine. This chain is tRNA-2-methylthio-N(6)-dimethylallyladenosine synthase, found in Escherichia coli O81 (strain ED1a).